An 896-amino-acid chain; its full sequence is Zinc finger protein 574 (896 aa).

C2H2-type zinc fingers lie at residues 16–38, 76–98, and 126–148; these read YVCS…QNSH, YQCL…QELH, and YECV…RQTH. S164 bears the Phosphoserine mark. A C2H2-type 4 zinc finger spans residues 214–236; it reads YKCSECSQLFQLPADFLEHQATH. Positions 239–301 are disordered; sequence APVPESQEPA…RARRNNSGEA (63 aa). Residues 247-257 show a composition bias toward polar residues; sequence PALQQEVQASS. Basic and acidic residues predominate over residues 274-287; the sequence is HSYELRNGEAIGRD. At S298 the chain carries Phosphoserine. 4 C2H2-type zinc fingers span residues 309–331, 336–358, 364–386, and 392–413; these read LFCS…LRSH, FKCP…LGDH, FLCV…RRAH, and HSCP…RRTH. Residues 434–460 are disordered; sequence FPEPAPAETGEPEAPEPPVSEETSAGP. C2H2-type zinc fingers lie at residues 466–489, 495–517, 523–545, 551–573, 579–601, and 607–630; these read YRCL…RFVH, HKCS…LRTH, FPCP…RLTH, YRCG…RLVH, YRCQ…RYHH, and YKCR…LVVH. Residues 636 to 659 form a C2H2-type 15; degenerate zinc finger; it reads HRCPSCGAAFPSSLRLREHRCAAA. Residues 667 to 689 form a C2H2-type 16 zinc finger; the sequence is FECGTCGKKVGSAARLQAHEAAH. The interval 687 to 733 is disordered; the sequence is AAHAAAGPGEVLAKEPPAPRAPRATRAPVASPAGLGGTATASPAAPA. Positions 707–732 are enriched in low complexity; it reads APRATRAPVASPAGLGGTATASPAAP. S717 bears the Phosphoserine mark. T724 carries the post-translational modification Phosphothreonine. A Phosphoserine modification is found at S728. C2H2-type zinc fingers lie at residues 738-760, 766-788, 794-816, and 822-844; these read LECS…RRIH, YPCP…RRLH, FACE…RRIH, and YSCP…RKTH. An Asymmetric dimethylarginine modification is found at R832.

Belongs to the krueppel C2H2-type zinc-finger protein family.

The protein resides in the nucleus. Its function is as follows. May be involved in transcriptional regulation. The chain is Zinc finger protein 574 (ZNF574) from Macaca fascicularis (Crab-eating macaque).